We begin with the raw amino-acid sequence, 161 residues long: SsrA-binding protein (161 aa).

Residues 137 to 161 are disordered; the sequence is HDKRTDSKEKDWNRDKARIMKSSLR. Residues 139 to 154 are compositionally biased toward basic and acidic residues; it reads KRTDSKEKDWNRDKAR.

This sequence belongs to the SmpB family.

Its subcellular location is the cytoplasm. Its function is as follows. Required for rescue of stalled ribosomes mediated by trans-translation. Binds to transfer-messenger RNA (tmRNA), required for stable association of tmRNA with ribosomes. tmRNA and SmpB together mimic tRNA shape, replacing the anticodon stem-loop with SmpB. tmRNA is encoded by the ssrA gene; the 2 termini fold to resemble tRNA(Ala) and it encodes a 'tag peptide', a short internal open reading frame. During trans-translation Ala-aminoacylated tmRNA acts like a tRNA, entering the A-site of stalled ribosomes, displacing the stalled mRNA. The ribosome then switches to translate the ORF on the tmRNA; the nascent peptide is terminated with the 'tag peptide' encoded by the tmRNA and targeted for degradation. The ribosome is freed to recommence translation, which seems to be the essential function of trans-translation. This Aliivibrio salmonicida (strain LFI1238) (Vibrio salmonicida (strain LFI1238)) protein is SsrA-binding protein.